Consider the following 122-residue polypeptide: Large ribosomal subunit protein bL12 (122 aa).

It belongs to the bacterial ribosomal protein bL12 family. Homodimer. Part of the ribosomal stalk of the 50S ribosomal subunit. Forms a multimeric L10(L12)X complex, where L10 forms an elongated spine to which 2 to 4 L12 dimers bind in a sequential fashion. Binds GTP-bound translation factors.

Functionally, forms part of the ribosomal stalk which helps the ribosome interact with GTP-bound translation factors. Is thus essential for accurate translation. The protein is Large ribosomal subunit protein bL12 of Xylella fastidiosa (strain M12).